Consider the following 345-residue polypeptide: Lysine-specific demethylase JMJ32 (345 aa).

In terms of domain architecture, JmjC spans 122 to 315 (GYLQQQNDCF…IKYAYFNFLQ (194 aa)). Fe cation-binding residues include H174, D176, and H281.

It belongs to the JARID1 histone demethylase family. Fe(2+) serves as cofactor. Expressed ubiquitously including in vasculatures, leaves, siliques, roots and inflorescences. Present in the root meristem. Accumulates in cotyledons and root tips of young seedlings.

The protein localises to the nucleus. Its subcellular location is the cytoplasm. The protein resides in the endoplasmic reticulum. The catalysed reaction is N(6),N(6),N(6)-trimethyl-L-lysyl(27)-[histone H3] + 2-oxoglutarate + O2 = N(6),N(6)-dimethyl-L-lysyl(27)-[histone H3] + formaldehyde + succinate + CO2. The enzyme catalyses N(6),N(6)-dimethyl-L-lysyl(27)-[histone H3] + 2-oxoglutarate + O2 = N(6)-methyl-L-lysyl(27)-[histone H3] + formaldehyde + succinate + CO2. It carries out the reaction N(6),N(6),N(6)-trimethyl-L-lysyl(27)-[histone H3] + 2 2-oxoglutarate + 2 O2 = N(6)-methyl-L-lysyl(27)-[histone H3] + 2 formaldehyde + 2 succinate + 2 CO2. Functionally, histone demethylase that demethylates 'Lys-27' (H3K27me) of histone H3 with a specific activity for H3K27me3 and H3K27me2, and involved in the regulation of gene expression. No activity on H3K27me1. Together with JMJ30, regulates the flowering-repressor FLOWERING LOCUS C (FLC) locus by removing the repressive histone modification H3 lysine 27 trimethylation (H3K27me3), especially at elevated temperatures (e.g. 29 degrees Celsius), thus preventing extreme precocious flowering. JMJ30 and JMJ32 are regulators involved in the integration of abscisic acid (ABA) and brassinosteroids (BR) signaling pathways. Together with JMJ30, controls ABA-mediated growth arrest during the post-germination stage in unfavorable conditions, and responses to ABA during root development, via the removal of repressive histone mark (H3K27me3) from the SnRK2.8 promoter, thus promoting SnRK2.8 expression and subsequent kinase-dependent ABI3 activation. In addition, removes the repressive histone marks (H3K27me3) from the BZR1 locus in response to stress and ABA, thus activating the BR signaling pathway which, in turn, inhibits the ABA signaling pathway. This is Lysine-specific demethylase JMJ32 from Arabidopsis thaliana (Mouse-ear cress).